The chain runs to 262 residues: Protein Pcal_0062 (262 aa).

The protein belongs to the CinA family.

This Pyrobaculum calidifontis (strain DSM 21063 / JCM 11548 / VA1) protein is Protein Pcal_0062.